The primary structure comprises 307 residues: Putative S-adenosyl-L-methionine-dependent methyltransferase Mflv_5023 (307 aa).

Residues aspartate 133 and 162–163 (DL) contribute to the S-adenosyl-L-methionine site. A disordered region spans residues 213–234 (SRLAVESVPSQQSADQDEMREK).

This sequence belongs to the UPF0677 family.

Functionally, exhibits S-adenosyl-L-methionine-dependent methyltransferase activity. This chain is Putative S-adenosyl-L-methionine-dependent methyltransferase Mflv_5023, found in Mycolicibacterium gilvum (strain PYR-GCK) (Mycobacterium gilvum (strain PYR-GCK)).